An 84-amino-acid chain; its full sequence is UPF0153 protein YeiW (84 aa).

This sequence belongs to the UPF0153 family.

This is UPF0153 protein YeiW (yeiW) from Escherichia coli (strain K12).